Reading from the N-terminus, the 384-residue chain is Formate-dependent phosphoribosylglycinamide formyltransferase (384 aa).

N(1)-(5-phospho-beta-D-ribosyl)glycinamide-binding positions include 14-15 (EL) and Glu74. ATP contacts are provided by residues Arg106, Lys147, 152–157 (SSGKGQ), 187–190 (EEFI), and Glu195. Residues 111 to 300 (RLAAETLGLA…EFALHVRAIL (190 aa)) form the ATP-grasp domain. Glu259 and Glu271 together coordinate Mg(2+). N(1)-(5-phospho-beta-D-ribosyl)glycinamide-binding positions include Asp278, Lys348, and 355 to 356 (RR).

It belongs to the PurK/PurT family. As to quaternary structure, homodimer.

The enzyme catalyses N(1)-(5-phospho-beta-D-ribosyl)glycinamide + formate + ATP = N(2)-formyl-N(1)-(5-phospho-beta-D-ribosyl)glycinamide + ADP + phosphate + H(+). Its pathway is purine metabolism; IMP biosynthesis via de novo pathway; N(2)-formyl-N(1)-(5-phospho-D-ribosyl)glycinamide from N(1)-(5-phospho-D-ribosyl)glycinamide (formate route): step 1/1. Functionally, catalyzes two reactions: the first one is the production of beta-formyl glycinamide ribonucleotide (GAR) from formate, ATP and beta GAR; the second, a side reaction, is the production of acetyl phosphate and ADP from acetate and ATP. In terms of biological role, involved in the de novo purine biosynthesis. Catalyzes the transfer of formate to 5-phospho-ribosyl-glycinamide (GAR), producing 5-phospho-ribosyl-N-formylglycinamide (FGAR). Formate is provided by PurU via hydrolysis of 10-formyl-tetrahydrofolate. This Bacillus subtilis (strain 168) protein is Formate-dependent phosphoribosylglycinamide formyltransferase.